The primary structure comprises 388 residues: Protein RecA (388 aa).

ATP is bound at residue 79 to 86 (GPESSGKT). The interval 347 to 388 (IDGEEVSEQDTENKKDEPKKEEAVNEEVPLDLGDELEIEIEE) is disordered. Positions 357 to 369 (TENKKDEPKKEEA) are enriched in basic and acidic residues. The segment covering 370 to 388 (VNEEVPLDLGDELEIEIEE) has biased composition (acidic residues).

The protein belongs to the RecA family.

Its subcellular location is the cytoplasm. Its function is as follows. Can catalyze the hydrolysis of ATP in the presence of single-stranded DNA, the ATP-dependent uptake of single-stranded DNA by duplex DNA, and the ATP-dependent hybridization of homologous single-stranded DNAs. It interacts with LexA causing its activation and leading to its autocatalytic cleavage. The chain is Protein RecA from Streptococcus pneumoniae (strain Hungary19A-6).